The sequence spans 382 residues: RNA binding protein fox-1 homolog 1-like (382 aa).

2 disordered regions span residues 34 to 79 and 94 to 148; these read QEAG…AAHP and GPQH…QPKR. The segment covering 49 to 65 has biased composition (pro residues); the sequence is YAPPPSYPPPGQAPPTP. Positions 101–110 are enriched in polar residues; it reads ESITASNTDD. The RRM domain occupies 147-223; sequence KRLHVSNIPF…RKIEVNNATA (77 aa).

In terms of tissue distribution, expressed during muscle development in adaxial cells, somites, cardiac precursors, finbuds and jaw muscle cells.

It localises to the nucleus. RNA-binding protein that regulates alternative splicing events by binding to 5'-GCAUG-3' elements. Regulates alternative splicing of tissue-specific exons. This is RNA binding protein fox-1 homolog 1-like (rbfox1l) from Danio rerio (Zebrafish).